The following is a 638-amino-acid chain: Chaperone protein HtpG (638 aa).

The tract at residues Met1 to Arg346 is a; substrate-binding. Positions Glu347–Lys563 are b. Positions Leu564 to Lys638 are c.

It belongs to the heat shock protein 90 family. As to quaternary structure, homodimer.

The protein resides in the cytoplasm. Its function is as follows. Molecular chaperone. Has ATPase activity. The sequence is that of Chaperone protein HtpG from Shewanella sediminis (strain HAW-EB3).